We begin with the raw amino-acid sequence, 391 residues long: MAKKTNYVKNGKEYYRVTVTIGRDENGKLIRKEFYGKTKKEAEAKKEEYLNGIRNGLNVDFQDVTLGDLMHTWLFEVVRMSRKPATFVKYEGHYRNYIKNSELYGMKISIIKSIQIQRYYNKLYQQGKSSKTIKALNNFLKTFFNYAVDEGYLAKNPCTGKKIVIPGTPEEKIETEIETFSDEEIKKIKEALKGHRLKALFLLAFGTGLRQGELLGLKWTDIDFEKKELRVQRMIKQVTIIDEKGNRKYKTIEQIPKTKNSIRTVPIPSSLIPMLKEHRNRQREEKLKAGSVYLNDVEKGYVFTTELGNTIDASNLLKTYKKILNRAGVPYRKFHAIRHTYATKLFERGVPLKTVSELLGHSNISITANIYTHVIPKQKTNAVETLNDLFI.

A Core-binding (CB) domain is found at 64-148 (VTLGDLMHTW…FLKTFFNYAV (85 aa)). Residues 175 to 384 (TEIETFSDEE…IPKQKTNAVE (210 aa)) enclose the Tyr recombinase domain. Residues Arg-210, Lys-244, His-335, Arg-338, and His-361 contribute to the active site. Residue Tyr-371 is the O-(3'-phospho-DNA)-tyrosine intermediate of the active site.

The protein belongs to the 'phage' integrase family.

The protein resides in the cytoplasm. Site-specific tyrosine recombinase, which acts by catalyzing the cutting and rejoining of the recombining DNA molecules. In Caldanaerobacter subterraneus subsp. tengcongensis (strain DSM 15242 / JCM 11007 / NBRC 100824 / MB4) (Thermoanaerobacter tengcongensis), this protein is Tyrosine recombinase XerC-like.